The chain runs to 1311 residues: Sterol regulatory element-binding protein cleavage-activating protein (1311 aa).

The Cytoplasmic segment spans residues 1-18; it reads MPLIDKLRERISRAFYSH. Residues 19 to 39 form a helical membrane-spanning segment; sequence GLLCASYPIPIIILTALCILA. The Lumenal portion of the chain corresponds to 40–277; that stretch reads SCYPLLKLPL…HIVHVHFKEE (238 aa). The interval 46–282 is loop-1; it reads KLPLPGTGPV…HFKEEIGIAE (237 aa). Asparagine 242 and asparagine 261 each carry an N-linked (GlcNAc...) asparagine glycan. Residues 278–298 traverse the membrane as a helical segment; it reads IGIAELIPLVTTYIILFAYIY. Residues 282 to 440 enclose the SSD domain; it reads ELIPLVTTYI…MFFFTTVLSI (159 aa). Residues 299 to 310 lie on the Cytoplasmic side of the membrane; that stretch reads FSTRKIDLVKSK. The helical transmembrane segment at 311 to 331 threads the bilayer; the sequence is WGLALAAVVTVLSSLLMSVGL. Residues 332-342 lie on the Lumenal side of the membrane; the sequence is CTLFGLTPTLN. Residues 343-363 traverse the membrane as a helical segment; that stretch reads GGEIFPYLVVVIGLENVLVLT. Topologically, residues 364-399 are cytoplasmic; sequence KSVVSTPVDLEVKLRIAQGLRNESWFIMKNMATELG. A helical transmembrane segment spans residues 400–420; the sequence is IILIGYFTLVPAIQEFCLFAV. Residue valine 421 is a topological domain, lumenal. Residues 422-442 traverse the membrane as a helical segment; it reads GLVSDFFLQMFFFTTVLSIDI. Topologically, residues 443–512 are cytoplasmic; sequence RRMELADLNK…FFARTRLAQR (70 aa). The short motif at 445 to 450 is the ER export signal element; the sequence is MELADL. A helical transmembrane segment spans residues 513 to 533; the sequence is IIMAGTVVWIGILVYTDPAGL. A loop-7 region spans residues 529 to 726; that stretch reads DPAGLRNYLT…QTPADVTLYK (198 aa). Topologically, residues 534 to 723 are lumenal; the sequence is RNYLTVHVTE…TENQTPADVT (190 aa). N-linked (GlcNAc...) asparagine glycans are attached at residues asparagine 583 and asparagine 651. Residues 724 to 744 form a helical membrane-spanning segment; sequence LYKVAALGLASGIFLVLFFFL. The Cytoplasmic segment spans residues 745–1311; sequence LYRLLCPKNY…YVPSVLEKLD (567 aa). The tract at residues 747-1311 is interaction with srebf; that stretch reads RLLCPKNYGQ…YVPSVLEKLD (565 aa). WD repeat units follow at residues 790 to 827, 997 to 1034, 1037 to 1076, 1109 to 1146, 1149 to 1187, 1190 to 1227, and 1230 to 1267; these read GHHM…CLTI, SFES…LRCS, DGQS…NQLQ, AHRK…CLFT, GHSG…RVSH, GHRG…KLYS, and QDLG…LLQT.

It belongs to the WD repeat SCAP family. In terms of assembly, membrane region forms a homotetramer. Component of the SCAP-SREBP complex (composed of SCAP and srebf1/srebp1 or srebf2/srebp2). Forms a ternary complex with insig1 or insig2 through its transmembrane domains at high sterol concentrations. Interacts with the SEC23-SEC24 complex.

The protein localises to the endoplasmic reticulum membrane. It localises to the golgi apparatus membrane. It is found in the cytoplasmic vesicle. The protein resides in the COPII-coated vesicle membrane. Its function is as follows. Escort protein required for cholesterol as well as lipid homeostasis. Regulates export of the SCAP-SREBP complex from the endoplasmic reticulum to the Golgi upon low cholesterol, thereby regulating the processing of sterol regulatory element-binding proteins (SREBPs) SREBF1/SREBP1 and SREBF2/SREBP2. At high sterol concentrations, formation of a ternary complex with INSIG (INSIG1 or INSIG2) leads to mask the ER export signal in SCAP, promoting retention of the complex in the endoplasmic reticulum. Low sterol concentrations trigger release of INSIG, a conformational change in the SSD domain of SCAP, unmasking of the ER export signal, promoting recruitment into COPII-coated vesicles and transport of the SCAP-SREBP to the Golgi: in the Golgi, SREBPs are then processed, releasing the transcription factor fragment of SREBPs from the membrane, its import into the nucleus and up-regulation of LDLR, INSIG1 and the mevalonate pathway. Binds cholesterol via its SSD domain. This Xenopus laevis (African clawed frog) protein is Sterol regulatory element-binding protein cleavage-activating protein.